We begin with the raw amino-acid sequence, 687 residues long: Carboxysome assembly protein CcmM (687 aa).

The interval 242 to 327 is rbcS-like repeat 1, SSUL1; sequence SINSDITNQI…RVVEVIIQRP (86 aa). 2 disordered regions span residues 328 to 355 and 442 to 476; these read GDVPGSPSRGTTTTKALSSGGSGRSAVA and VHRPNGNGNGKPSSSSSSVGYKSAPVSSAGGSSAG. A compositionally biased stretch (polar residues) spans 335–346; the sequence is SRGTTTTKALSS. The segment at 366–445 is rbcS-like repeat 2, SSUL2; sequence ANQLRALLHQ…RVAEIVVHRP (80 aa). The span at 451–472 shows a compositional bias: low complexity; it reads GKPSSSSSSVGYKSAPVSSAGG. Residues 480–562 form a rbcS-like repeat 3, SSUL3 region; it reads PEVIATVRGL…RVLEQIIQRP (83 aa). The interval 565–590 is disordered; the sequence is NVVAGRSPSSSSASTSSSASSNGFGS. A compositionally biased stretch (low complexity) spans 568–587; that stretch reads AGRSPSSSSASTSSSASSNG. Positions 599-687 are rbcS-like repeat 4, SSUL4; the sequence is SAVRLDNSVV…RVLETIIQRP (89 aa).

It belongs to the gamma-class carbonic anhydrase family. In terms of assembly, probably forms homotrimers. Full length CcmM interacts with CcaA, CcmK1, CcmK2, CcmK4, CcmL, CcmN and itself, while the N-terminus of CcmM (first 249 residues) only interacts with CcaA, CcmM and CcmN. A probable CcmM-CcaA-CcmN complex as well as a CcaA-RuBisCO-CcmM complex can also be isolated. Interacts with full-length CcaA and the first 220 residues of CcaA; surface residues Gln-177 to Gln-188 are responsible in part for binding. Multiple forms of the protein of 73 (full length), 62, 52 (the most predominant form) and 36 kDa are seen even in the presence of protease inhibitors. CcmM52 interacts with CcaA.

It is found in the carboxysome. In terms of biological role, functions as a scaffold protein for the assembly of beta-carboxysomes, initiates carboxysome assembly via its N-terminal domain binding to CcaA, CcmK and CcmL. Binds HCO(3)-, suggesting it may play a role in the activity or regulation of bicarbonate dehydration. Also initiates carboxysome assembly by coalescing RuBisCO (ribulose bisphosphate carboxylase, rbcL-rbcS) via its SSU-like domains. Produced as a full-length and a shorter form; both forms are required for correct carboxysome assembly and growth. Despite its strong similarity to gamma-class carbonic anhydrase (CA) it does not have detectable CA activity. Its function is as follows. Beta-carboxysome assembly initiates when soluble RuBisCO is condensed into a liquid matrix in a pre-carboxysome by the RbcS-like domains of probably both forms of CcmM. CcmN interacts with the N-terminus of full length CcmM, and then recruits the shell proteins (CcmK) via CcmN's encapsulation peptide. CcmM73 also interacts with CcmK proteins and CcmL directly. Shell formation requires CcmK proteins and CcmO. CcmL caps the otherwise elongated carboxysome. Once fully encapsulated carboxysomes are formed, they migrate within the cell probably via interactions with the cytoskeleton. The chain is Carboxysome assembly protein CcmM from Synechocystis sp. (strain ATCC 27184 / PCC 6803 / Kazusa).